A 146-amino-acid polypeptide reads, in one-letter code: Hemoglobin cathodic subunit beta (146 aa).

The Globin domain occupies His2 to Phe146. Residues His63 and His92 each coordinate heme b.

The protein belongs to the globin family. As to quaternary structure, heterotetramer of two alpha chains and two beta chains. Red blood cells.

Functionally, involved in oxygen transport from gills to the various peripheral tissues. This Hoplosternum littorale (Hassar) protein is Hemoglobin cathodic subunit beta (hbb).